A 327-amino-acid chain; its full sequence is Lipid phosphate phosphatase 1 (327 aa).

6 consecutive transmembrane segments (helical) span residues 51–71 (WIIL…SPFY), 93–113 (IWSV…CFYL), 118–138 (VYDL…TGVI), 187–207 (FPSG…LYLS), 217–237 (GHVA…LVGI), and 244–264 (WHHW…AAFC).

The protein belongs to the PA-phosphatase related phosphoesterase family. As to expression, strongly expressed in leaves, moderately in roots, weakly in floral hamps and flower buds, and not detected in adult flowers and seedpods.

The protein resides in the membrane. Its activity is regulated as follows. PA phosphatase activity inhibited by N-ethylmaleimide with an IC(50) value of 10 mM. Functionally, plays a general role in cellular responses to stress, may be by attenuating the signal produced by phospholipases. Exhibits both diacylglycerol pyrophosphate (DGPP) phosphatase and phosphatidate (PA) phosphatase activities. Substrate preference is diacylglycerol pyrophosphate &gt; phosphatidate. This Arabidopsis thaliana (Mouse-ear cress) protein is Lipid phosphate phosphatase 1 (LPP1).